Reading from the N-terminus, the 871-residue chain is Coatomer subunit gamma-2 (871 aa).

Residues 1-11 (MIKKFDKKDEE) show a composition bias toward basic and acidic residues. Residues 1–20 (MIKKFDKKDEESGSGSNPFR) are disordered. 6 HEAT repeats span residues 64–101 (TEAT…ISED), 283–320 (RELA…KHPS), 321–355 (AVTA…GSES), 356–392 (SVDR…KYPR), 395–430 (SVMM…ENPE), and 467–504 (PVPS…QNEN). Threonine 594 carries the post-translational modification Phosphothreonine.

Belongs to the COPG family. As to quaternary structure, oligomeric complex. Binds to CDC42. Interacts with JAGN1. Interacts with TMED10 (via cytoplasmic domain).

The protein localises to the cytoplasm. It is found in the cytosol. Its subcellular location is the golgi apparatus membrane. The protein resides in the cytoplasmic vesicle. It localises to the COPI-coated vesicle membrane. The coatomer is a cytosolic protein complex that binds to dilysine motifs and reversibly associates with Golgi non-clathrin-coated vesicles, which further mediate biosynthetic protein transport from the ER, via the Golgi up to the trans Golgi network. Coatomer complex is required for budding from Golgi membranes, and is essential for the retrograde Golgi-to-ER transport of dilysine-tagged proteins. In mammals, the coatomer can only be recruited by membranes associated to ADP-ribosylation factors (ARFs), which are small GTP-binding proteins; the complex also influences the Golgi structural integrity, as well as the processing, activity, and endocytic recycling of LDL receptors. The chain is Coatomer subunit gamma-2 (COPG2) from Bos taurus (Bovine).